The chain runs to 227 residues: Cytochrome c oxidase subunit 2 (227 aa).

Residues 1-14 are Mitochondrial intermembrane-facing; it reads MAYPFQLGLQDATS. A helical membrane pass occupies residues 15-45; that stretch reads PIMEELMNFHDHTLMIVFLISSLVLYIISLM. Topologically, residues 46–59 are mitochondrial matrix; that stretch reads LTTKLTHTSTMDAQ. A helical membrane pass occupies residues 60 to 87; sequence EVETIWTILPAVILILIALPSLRILYMM. Residues 88–227 are Mitochondrial intermembrane-facing; that stretch reads DEINNPVLTV…NFENWSASMI (140 aa). Residues H161, C196, E198, C200, H204, and M207 each contribute to the Cu cation site. Residue E198 participates in Mg(2+) binding.

This sequence belongs to the cytochrome c oxidase subunit 2 family. Component of the cytochrome c oxidase (complex IV, CIV), a multisubunit enzyme composed of 14 subunits. The complex is composed of a catalytic core of 3 subunits MT-CO1, MT-CO2 and MT-CO3, encoded in the mitochondrial DNA, and 11 supernumerary subunits COX4I, COX5A, COX5B, COX6A, COX6B, COX6C, COX7A, COX7B, COX7C, COX8 and NDUFA4, which are encoded in the nuclear genome. The complex exists as a monomer or a dimer and forms supercomplexes (SCs) in the inner mitochondrial membrane with NADH-ubiquinone oxidoreductase (complex I, CI) and ubiquinol-cytochrome c oxidoreductase (cytochrome b-c1 complex, complex III, CIII), resulting in different assemblies (supercomplex SCI(1)III(2)IV(1) and megacomplex MCI(2)III(2)IV(2)). Found in a complex with TMEM177, COA6, COX18, COX20, SCO1 and SCO2. Interacts with TMEM177 in a COX20-dependent manner. Interacts with COX20. Interacts with COX16. The cofactor is Cu cation.

Its subcellular location is the mitochondrion inner membrane. The enzyme catalyses 4 Fe(II)-[cytochrome c] + O2 + 8 H(+)(in) = 4 Fe(III)-[cytochrome c] + 2 H2O + 4 H(+)(out). Functionally, component of the cytochrome c oxidase, the last enzyme in the mitochondrial electron transport chain which drives oxidative phosphorylation. The respiratory chain contains 3 multisubunit complexes succinate dehydrogenase (complex II, CII), ubiquinol-cytochrome c oxidoreductase (cytochrome b-c1 complex, complex III, CIII) and cytochrome c oxidase (complex IV, CIV), that cooperate to transfer electrons derived from NADH and succinate to molecular oxygen, creating an electrochemical gradient over the inner membrane that drives transmembrane transport and the ATP synthase. Cytochrome c oxidase is the component of the respiratory chain that catalyzes the reduction of oxygen to water. Electrons originating from reduced cytochrome c in the intermembrane space (IMS) are transferred via the dinuclear copper A center (CU(A)) of subunit 2 and heme A of subunit 1 to the active site in subunit 1, a binuclear center (BNC) formed by heme A3 and copper B (CU(B)). The BNC reduces molecular oxygen to 2 water molecules using 4 electrons from cytochrome c in the IMS and 4 protons from the mitochondrial matrix. This is Cytochrome c oxidase subunit 2 (MT-CO2) from Maxomys bartelsii (Bartels's Javan maxomys).